Consider the following 83-residue polypeptide: Keratin-associated protein 6-1 (83 aa).

Residues 9 to 15 (YGGLGCG) form an RPT 1-1 repeat. The RPT 1-2 repeat unit spans residues 19–25 (YGGLGCG). The stretch at 44-55 (GYGYGSRSLCGS) is one RPT 2-1 repeat. The RPT 2-2 repeat unit spans residues 56 to 67 (GYGYGSRSLCGS).

This sequence belongs to the KRTAP type 6 family. Interacts with wool keratins.

In terms of biological role, in the wool cortex, wool keratin intermediate filaments are embedded in an interfilamentous matrix, consisting of hair keratin-associated proteins (KRTAP), which are essential for the formation of a rigid and resistant wool shaft through their extensive disulfide bond cross-linking with abundant cysteine residues of wool keratins. The matrix proteins include the high-sulfur and high-glycine-tyrosine keratins. In Ovis aries (Sheep), this protein is Keratin-associated protein 6-1 (KRTAP6-1).